A 336-amino-acid polypeptide reads, in one-letter code: Atypical chemokine receptor 1 (336 aa).

At 1–63 (MGNCLHTAEL…CNLLDDSALP (63 aa)) the chain is on the extracellular side. N-linked (GlcNAc...) asparagine glycans are attached at residues N16, N27, and N33. 2 disulfide bridges follow: C51–C276 and C129–C195. The chain crosses the membrane as a helical span at residues 64-84 (FFILTSVLGILASSTVLFILF). Residues 85 to 95 (RPLFRWQLCPG) are Cytoplasmic-facing. The helical transmembrane segment at 96–116 (WPVLAQLAVGSALFSIVVPIL) threads the bilayer. The Extracellular segment spans residues 117–129 (APGLGSTHSSALC). A helical membrane pass occupies residues 130–153 (SLGYCVWYGSAFAQALLLGCHASL). The Cytoplasmic segment spans residues 154 to 166 (GHRLGAGQVPGLT). Residues 167 to 187 (LGLTVGIWGVAALLTLPVTLA) form a helical membrane-spanning segment. Over 188–207 (SGASGGLCTPIHSTELKALQ) the chain is Extracellular. The helical transmembrane segment at 208–228 (ATHTVACLAIFVLLPLGLFGA) threads the bilayer. Residues 229–244 (KGLKKALGMGPGPWMN) lie on the Cytoplasmic side of the membrane. Residues 245–265 (ILWAWFIFWWPHGVVLGLDFL) traverse the membrane as a helical segment. The Extracellular segment spans residues 266–287 (VRSKLLLLSTCLAQQALDLLLN). A helical transmembrane segment spans residues 288–308 (LAEALAILHCVATPLILALFY). The Cytoplasmic portion of the chain corresponds to 309–336 (HQATRTLLPSLPLPEGWSSHLDTLGSKS).

The protein belongs to the G-protein coupled receptor 1 family. Atypical chemokine receptor subfamily.

Its subcellular location is the early endosome. The protein resides in the recycling endosome. The protein localises to the membrane. Atypical chemokine receptor that controls chemokine levels and localization via high-affinity chemokine binding that is uncoupled from classic ligand-driven signal transduction cascades, resulting instead in chemokine sequestration, degradation, or transcytosis. Also known as interceptor (internalizing receptor) or chemokine-scavenging receptor or chemokine decoy receptor. Has a promiscuous chemokine-binding profile, interacting with inflammatory chemokines of both the CXC and the CC subfamilies but not with homeostatic chemokines. Acts as a receptor for chemokines including CCL2, CCL5, CCL7, CCL11, CCL13, CCL14, CCL17, CXCL5, CXCL6, IL8/CXCL8, CXCL11, GRO, RANTES, MCP-1 and TARC. May regulate chemokine bioavailability and, consequently, leukocyte recruitment through two distinct mechanisms: when expressed in endothelial cells, it sustains the abluminal to luminal transcytosis of tissue-derived chemokines and their subsequent presentation to circulating leukocytes; when expressed in erythrocytes, serves as blood reservoir of cognate chemokines but also as a chemokine sink, buffering potential surges in plasma chemokine levels. This is Atypical chemokine receptor 1 (ACKR1) from Gorilla gorilla gorilla (Western lowland gorilla).